Here is a 150-residue protein sequence, read N- to C-terminus: MAKKSVRHIKIREIISSEQIETQDELVKRLNEYDLNVTQATVSRDIKELQLIKVPAPSGQYVYSLPNDRKYHPLEKLGRYLMDSFVNIEGTGNLLVLKTLPGNAQSIGAILDQIDWDEVLGTICGDDTCLLICKDEDASNTIKTRIFNLL.

This sequence belongs to the ArgR family.

Its subcellular location is the cytoplasm. It functions in the pathway amino-acid biosynthesis; L-arginine biosynthesis [regulation]. In terms of biological role, regulates arginine biosynthesis genes. In Staphylococcus haemolyticus (strain JCSC1435), this protein is Arginine repressor.